The following is a 209-amino-acid chain: FMN-dependent NADH:quinone oxidoreductase (209 aa).

FMN contacts are provided by residues serine 9 and 15–17 (SNS).

This sequence belongs to the azoreductase type 1 family. As to quaternary structure, homodimer. It depends on FMN as a cofactor.

The enzyme catalyses 2 a quinone + NADH + H(+) = 2 a 1,4-benzosemiquinone + NAD(+). The catalysed reaction is N,N-dimethyl-1,4-phenylenediamine + anthranilate + 2 NAD(+) = 2-(4-dimethylaminophenyl)diazenylbenzoate + 2 NADH + 2 H(+). Quinone reductase that provides resistance to thiol-specific stress caused by electrophilic quinones. Its function is as follows. Also exhibits azoreductase activity. Catalyzes the reductive cleavage of the azo bond in aromatic azo compounds to the corresponding amines. This chain is FMN-dependent NADH:quinone oxidoreductase, found in Bordetella parapertussis (strain 12822 / ATCC BAA-587 / NCTC 13253).